The chain runs to 283 residues: Diaminopimelate epimerase (283 aa).

Substrate contacts are provided by asparagine 13 and asparagine 66. The active-site Proton donor is the cysteine 75. Residues 76–77 (GN), asparagine 165, asparagine 198, and 216–217 (ER) each bind substrate. The Proton acceptor role is filled by cysteine 225. Position 226–227 (226–227 (GT)) interacts with substrate.

Belongs to the diaminopimelate epimerase family. Homodimer.

The protein resides in the cytoplasm. It catalyses the reaction (2S,6S)-2,6-diaminopimelate = meso-2,6-diaminopimelate. The protein operates within amino-acid biosynthesis; L-lysine biosynthesis via DAP pathway; DL-2,6-diaminopimelate from LL-2,6-diaminopimelate: step 1/1. Catalyzes the stereoinversion of LL-2,6-diaminopimelate (L,L-DAP) to meso-diaminopimelate (meso-DAP), a precursor of L-lysine and an essential component of the bacterial peptidoglycan. This chain is Diaminopimelate epimerase, found in Acaryochloris marina (strain MBIC 11017).